The following is a 147-amino-acid chain: Small ribosomal subunit protein bS6 (147 aa).

Residues 97-141 (EEGPSAMMRKADRDRERDDRGGGFRGDREGGFRGDRGPRRPREEA) are compositionally biased toward basic and acidic residues. The tract at residues 97 to 147 (EEGPSAMMRKADRDRERDDRGGGFRGDREGGFRGDRGPRRPREEAPAVVEE) is disordered.

It belongs to the bacterial ribosomal protein bS6 family.

In terms of biological role, binds together with bS18 to 16S ribosomal RNA. In Nitrobacter hamburgensis (strain DSM 10229 / NCIMB 13809 / X14), this protein is Small ribosomal subunit protein bS6.